A 317-amino-acid polypeptide reads, in one-letter code: Melanocyte-stimulating hormone receptor (317 aa).

The disordered stretch occupies residues 1 to 28 (MPMQGAQGRLRGSLNATPPTTPHSGLAG). Residues 1 to 37 (MPMQGAQGRLRGSLNATPPTTPHSGLAGNQTGPWCLE) lie on the Extracellular side of the membrane. The N-linked (GlcNAc...) asparagine glycan is linked to N29. Residues 38–63 (VSIPDELFLSLGLVSLVENMLVVAAI) traverse the membrane as a helical segment. Residues 64–72 (AKNRNLHSP) are Cytoplasmic-facing. The helical transmembrane segment at 73-93 (MYYFICCLAVSDLLVSVSNVL) threads the bilayer. The Extracellular segment spans residues 94–118 (ETAVMLLLEAGVLAAWAGVVQQLDN). Residues 119–140 (AIDVFICGSMVSSLCFLGAIAV) traverse the membrane as a helical segment. Residues 141-163 (DRYITIFYALRYHSIVTLPRARW) are Cytoplasmic-facing. The chain crosses the membrane as a helical span at residues 164 to 183 (AIATIWAASVVCSTLFIAYY). Residues 184-191 (DCTAVLLC) are Extracellular-facing. Residues 192–211 (LVSFFLALVVLMAVLYMHML) form a helical membrane-spanning segment. Topologically, residues 212–240 (ARACLHARSIARLHKRWRPVHQGLGLKGA) are cytoplasmic. A helical membrane pass occupies residues 241–266 (ATLSILLGSFFLCWGPFFLHLTLIVL). The Extracellular segment spans residues 267–279 (CPQHPTCSCVFKN). The chain crosses the membrane as a helical span at residues 280 to 300 (FKLFLTLIICNSIVDPLIYAF). Over 301–317 (RSQELRKTLKEVLLCSW) the chain is Cytoplasmic. The S-palmitoyl cysteine moiety is linked to residue C315.

It belongs to the G-protein coupled receptor 1 family. As to quaternary structure, interacts with MGRN1, but does not undergo MGRN1-mediated ubiquitination; this interaction competes with GNAS-binding and thus inhibits agonist-induced cAMP production. Interacts with OPN3; the interaction results in a decrease in MC1R-mediated cAMP signaling and ultimately a decrease in melanin production in melanocytes.

The protein resides in the cell membrane. In terms of biological role, receptor for MSH (alpha, beta and gamma) and ACTH. The activity of this receptor is mediated by G proteins which activate adenylate cyclase. Mediates melanogenesis, the production of eumelanin (black/brown) and phaeomelanin (red/yellow), via regulation of cAMP signaling in melanocytes. The chain is Melanocyte-stimulating hormone receptor (MC1R) from Mammuthus primigenius (Siberian woolly mammoth).